We begin with the raw amino-acid sequence, 408 residues long: Protein trichome birefringence-like 14 (408 aa).

Residues G11 to E31 form a helical; Signal-anchor for type II membrane protein membrane-spanning segment. Residues G131–S133 carry the GDS motif motif. The DCXHWCLPGXXDXWN motif motif lies at D387–N401.

The protein belongs to the PC-esterase family. TBL subfamily.

It is found in the membrane. Functionally, may act as a bridging protein that binds pectin and other cell wall polysaccharides. Probably involved in maintaining esterification of pectins. May be involved in the specific O-acetylation of cell wall polymers. The polypeptide is Protein trichome birefringence-like 14 (TBL14) (Arabidopsis thaliana (Mouse-ear cress)).